We begin with the raw amino-acid sequence, 571 residues long: Proline--tRNA ligase (571 aa).

This sequence belongs to the class-II aminoacyl-tRNA synthetase family. ProS type 1 subfamily. As to quaternary structure, homodimer.

The protein resides in the cytoplasm. The catalysed reaction is tRNA(Pro) + L-proline + ATP = L-prolyl-tRNA(Pro) + AMP + diphosphate. In terms of biological role, catalyzes the attachment of proline to tRNA(Pro) in a two-step reaction: proline is first activated by ATP to form Pro-AMP and then transferred to the acceptor end of tRNA(Pro). As ProRS can inadvertently accommodate and process non-cognate amino acids such as alanine and cysteine, to avoid such errors it has two additional distinct editing activities against alanine. One activity is designated as 'pretransfer' editing and involves the tRNA(Pro)-independent hydrolysis of activated Ala-AMP. The other activity is designated 'posttransfer' editing and involves deacylation of mischarged Ala-tRNA(Pro). The misacylated Cys-tRNA(Pro) is not edited by ProRS. The chain is Proline--tRNA ligase from Stutzerimonas stutzeri (strain A1501) (Pseudomonas stutzeri).